Here is a 294-residue protein sequence, read N- to C-terminus: N-acetylmuramic acid 6-phosphate etherase (294 aa).

The region spanning 54–217 is the SIS domain; it reads VIKSFEEEGR…STASMIGVGK (164 aa). Catalysis depends on Glu82, which acts as the Proton donor. Residue Glu113 is part of the active site.

The protein belongs to the GCKR-like family. MurNAc-6-P etherase subfamily. In terms of assembly, homodimer.

It carries out the reaction N-acetyl-D-muramate 6-phosphate + H2O = N-acetyl-D-glucosamine 6-phosphate + (R)-lactate. The protein operates within amino-sugar metabolism; N-acetylmuramate degradation. Functionally, specifically catalyzes the cleavage of the D-lactyl ether substituent of MurNAc 6-phosphate, producing GlcNAc 6-phosphate and D-lactate. In Bacillus cereus (strain B4264), this protein is N-acetylmuramic acid 6-phosphate etherase.